A 482-amino-acid polypeptide reads, in one-letter code: Glutamyl-tRNA(Gln) amidotransferase subunit A (482 aa).

Active-site charge relay system residues include Lys-75 and Ser-150. The Acyl-ester intermediate role is filled by Ser-174.

Belongs to the amidase family. GatA subfamily. Heterotrimer of A, B and C subunits.

The enzyme catalyses L-glutamyl-tRNA(Gln) + L-glutamine + ATP + H2O = L-glutaminyl-tRNA(Gln) + L-glutamate + ADP + phosphate + H(+). Its function is as follows. Allows the formation of correctly charged Gln-tRNA(Gln) through the transamidation of misacylated Glu-tRNA(Gln) in organisms which lack glutaminyl-tRNA synthetase. The reaction takes place in the presence of glutamine and ATP through an activated gamma-phospho-Glu-tRNA(Gln). The chain is Glutamyl-tRNA(Gln) amidotransferase subunit A from Cyanothece sp. (strain PCC 7425 / ATCC 29141).